A 446-amino-acid chain; its full sequence is ATP synthase subunit b-delta (446 aa).

Residues 1–168 (MSTFIGQLFG…PATADVDYPL (168 aa)) are ATP synthase subunit b. Residues 4–24 (FIGQLFGFAVIVYLVWRFIVP) traverse the membrane as a helical segment. Positions 169–446 (LAKMRSASRR…LAAAEARLPD (278 aa)) are ATP synthase subunit delta.

It in the N-terminal section; belongs to the ATPase B chain family. This sequence in the C-terminal section; belongs to the ATPase delta chain family. As to quaternary structure, F-type ATPases have 2 components, F(1) - the catalytic core - and F(0) - the membrane proton channel. F(1) has five subunits: alpha(3), beta(3), gamma(1), delta(1), epsilon(1). F(0) has three main subunits: a(1), b(2) and c(10-14). The alpha and beta chains form an alternating ring which encloses part of the gamma chain. F(1) is attached to F(0) by a central stalk formed by the gamma and epsilon chains, while a peripheral stalk is formed by the delta and b chains.

It localises to the cell membrane. Functionally, f(1)F(0) ATP synthase produces ATP from ADP in the presence of a proton or sodium gradient. F-type ATPases consist of two structural domains, F(1) containing the extramembraneous catalytic core and F(0) containing the membrane proton channel, linked together by a central stalk and a peripheral stalk. During catalysis, ATP synthesis in the catalytic domain of F(1) is coupled via a rotary mechanism of the central stalk subunits to proton translocation. This fusion protein includes a component of the F(0) channel (subunit b) and of the F(1) subunit (subunit delta). Two copies of subunit b and one of delta together form the peripheral 'stator' stalk which links F(1) to F(0). The protein is ATP synthase subunit b-delta (atpFH) of Mycobacterium bovis (strain ATCC BAA-935 / AF2122/97).